Here is a 592-residue protein sequence, read N- to C-terminus: MAVPPLLRGALLLWQLLATGGAALEIGRFDPERGRGPAPCQAMEIPMCRGIGYNLTRMPNLLGHTSQGEAAAQLAEFSPLVQYGCHSHLRFFLCSLYAPMCTDQVSTPIPACRPMCEQARLRCAPIMEQFNFGWPDSLDCARLPTRNDPHALCMEAPENATAGPTEPHKGLGMLPVAPRPARPPGDSAPGPGSGGTCDNPEKFQYVEKSRSCAPRCGPGVEVFWSRRDKDFALVWMAVWSALCFFSTAFTVFTFLLEPHRFQYPERPIIFLSMCYNVYSLAFLIRAVAGAQSVACDQEAGALYVIQEGLENTGCTLVFLLLYYFGMASSLWWVVLTLTWFLAAGKKWGHEAIEAHGSYFHMAAWGLPALKTIVVLTLRKVAGDELTGLCYVASMDPAALTGFVLVPLSCYLVLGTSFLLTGFVALFHIRKIMKTGGTNTEKLEKLMVKIGVFSILYTVPATCVIVCYVYERLNMDFWRLRATEQPCTAATVPGGRRDCSLPGGSVPTVAVFMLKIFMSLVVGITSGVWVWSSKTFQTWQSLCYRKMAAGRARAKACRTPGGYGRGTHCHYKAPTVVLHMTKTDPSLENPTHL.

The first 23 residues, 1-23 (MAVPPLLRGALLLWQLLATGGAA), serve as a signal peptide directing secretion. Over 24–230 (LEIGRFDPER…EVFWSRRDKD (207 aa)) the chain is Extracellular. The FZ domain occupies 35–156 (RGPAPCQAME…NDPHALCMEA (122 aa)). 5 disulfide bridges follow: C40–C101, C48–C94, C85–C123, C112–C153, and C116–C140. N54 carries an N-linked (GlcNAc...) asparagine glycan. The interval 59-173 (PNLLGHTSQG…PTEPHKGLGM (115 aa)) is required for Wnt-activated receptor activity. N159 carries an N-linked (GlcNAc...) asparagine glycan. The chain crosses the membrane as a helical span at residues 231–251 (FALVWMAVWSALCFFSTAFTV). Over 252–267 (FTFLLEPHRFQYPERP) the chain is Cytoplasmic. A helical membrane pass occupies residues 268–288 (IIFLSMCYNVYSLAFLIRAVA). Over 289–316 (GAQSVACDQEAGALYVIQEGLENTGCTL) the chain is Extracellular. The chain crosses the membrane as a helical span at residues 317–337 (VFLLLYYFGMASSLWWVVLTL). At 338 to 356 (TWFLAAGKKWGHEAIEAHG) the chain is on the cytoplasmic side. The helical transmembrane segment at 357–377 (SYFHMAAWGLPALKTIVVLTL) threads the bilayer. The Extracellular portion of the chain corresponds to 378-401 (RKVAGDELTGLCYVASMDPAALTG). The helical transmembrane segment at 402–422 (FVLVPLSCYLVLGTSFLLTGF) threads the bilayer. Topologically, residues 423–448 (VALFHIRKIMKTGGTNTEKLEKLMVK) are cytoplasmic. The helical transmembrane segment at 449–469 (IGVFSILYTVPATCVIVCYVY) threads the bilayer. Topologically, residues 470 to 509 (ERLNMDFWRLRATEQPCTAATVPGGRRDCSLPGGSVPTVA) are extracellular. The helical transmembrane segment at 510-530 (VFMLKIFMSLVVGITSGVWVW) threads the bilayer. At 531 to 592 (SSKTFQTWQS…DPSLENPTHL (62 aa)) the chain is on the cytoplasmic side. The Lys-Thr-X-X-X-Trp motif, mediates interaction with the PDZ domain of Dvl family members signature appears at 533–538 (KTFQTW). The interval 555 to 592 (ACRTPGGYGRGTHCHYKAPTVVLHMTKTDPSLENPTHL) is required for CTNNB1 accumulation and TCF transcription factor activity.

Belongs to the G-protein coupled receptor Fz/Smo family. Ubiquitinated by ZNRF3, leading to its degradation by the proteasome. In the embryo, found in the neural tube, trunk skeletal muscle precursors (myotomes), limb skeletal anlagen, craniofacial regions and nephric ducts. In the adult, expression is abundant in heart, brain, testis and skeletal muscle. In the testis, expressed in all spermatogenic cell types. Lower levels in adult lung, liver and kidney. Barely detectable in spleen. Expressed also in chondrocytes.

It localises to the cell membrane. In terms of biological role, receptor for WNT2 that is coupled to the beta-catenin canonical signaling pathway, which leads to the activation of disheveled proteins, inhibition of GSK-3 kinase, nuclear accumulation of beta-catenin and activation of Wnt target genes. Plays a role in neuromuscular junction (NMJ) assembly by negatively regulating the clustering of acetylcholine receptors (AChR) through the beta-catenin canonical signaling pathway. May play a role in neural progenitor cells (NPCs) viability through the beta-catenin canonical signaling pathway by negatively regulating cell cycle arrest leading to inhibition of neuron apoptotic process. During hippocampal development, regulates neuroblast proliferation and apoptotic cell death. Controls bone formation through non canonical Wnt signaling mediated via ISG15. Positively regulates bone regeneration through non canonical Wnt signaling. In Mus musculus (Mouse), this protein is Frizzled-9 (Fzd9).